The primary structure comprises 500 residues: Kynurenine 3-monooxygenase acdD (500 aa).

Residues Val17 and 36 to 38 (ELR) each bind FAD. Asn50 carries an N-linked (GlcNAc...) asparagine glycan. Position 58 (Ala58) interacts with FAD. 2 residues coordinate L-kynurenine: Arg89 and Tyr106. The FAD site is built by Arg118 and Leu143. The N-linked (GlcNAc...) asparagine glycan is linked to Asn163. Residues Asp321 and 332–335 (QGLN) contribute to the FAD site. L-kynurenine is bound by residues Asn392 and Tyr428. Residues 451–471 (LLLYGSISAIISSAAIVGVLA) traverse the membrane as a helical segment.

The protein belongs to the aromatic-ring hydroxylase family. KMO subfamily. Requires FAD as cofactor.

Its subcellular location is the mitochondrion outer membrane. It carries out the reaction L-kynurenine + NADPH + O2 + H(+) = 3-hydroxy-L-kynurenine + NADP(+) + H2O. It participates in secondary metabolite biosynthesis. Its pathway is cofactor biosynthesis; NAD(+) biosynthesis; quinolinate from L-kynurenine: step 1/3. Functionally, indoleamine 2,3-dioxygenase; part of the gene cluster that mediates the biosynthesis of aspcandine, a pyrrolobenzazepine alkaloid. Initially, the indoleamine 2,3-dioxygenase acdA accepts L-tryptophan and performs the oxidative opening of the indole ring to yield N'-formyl-L-kynurenine, which undergoes the spontaneous deformylation reaction to provide L-kynurenine. The kynurenine 3-monooxygenase acdD then hydroxylates L-kynurenine to afford 3-hydroxy-L-kynurenine. 3-hydroxy-L-kynurenine is activated by the A domain of the NRPS-PKS acdB and subsequently loaded onto the enzyme. The KS domain conducts the decarboxylative condensation of the 3-hydroxy-L-kynurenyl and malonyl moieties, and subsequent nucleophilic attacks by the two amino groups would occur nonenzymatically at two distinct positions, achieving the chain release and the construction of the tricyclic system. Finally, the dehydration reaction completes the biosynthesis to yield aspcandine. In Aspergillus candidus, this protein is Kynurenine 3-monooxygenase acdD.